A 595-amino-acid chain; its full sequence is ATP-dependent lipid A-core flippase (595 aa).

The tract at residues Met-1 to Val-20 is disordered. Positions Ser-9–Ala-19 are enriched in low complexity. 4 helical membrane-spanning segments follow: residues Trp-41–Ile-61, Gly-81–Gly-101, Val-169–Val-189, and Ile-266–Ala-286. The ABC transmembrane type-1 domain maps to Leu-45 to Arg-326. The region spanning Ile-357 to Arg-592 is the ABC transporter domain. Gly-390–Ser-397 contacts ATP.

Belongs to the ABC transporter superfamily. Lipid exporter (TC 3.A.1.106) family. Homodimer.

The protein localises to the cell inner membrane. The catalysed reaction is ATP + H2O + lipid A-core oligosaccharideSide 1 = ADP + phosphate + lipid A-core oligosaccharideSide 2.. Functionally, involved in lipopolysaccharide (LPS) biosynthesis. Translocates lipid A-core from the inner to the outer leaflet of the inner membrane. Transmembrane domains (TMD) form a pore in the inner membrane and the ATP-binding domain (NBD) is responsible for energy generation. This is ATP-dependent lipid A-core flippase from Psychrobacter arcticus (strain DSM 17307 / VKM B-2377 / 273-4).